A 273-amino-acid chain; its full sequence is Dermonecrotic toxin LhSicTox-alphaIA2bi (273 aa).

The Mg(2+) site is built by Glu25 and Asp27. His41 acts as the Nucleophile in catalysis. 2 disulfide bridges follow: Cys45–Cys51 and Cys47–Cys190. Asp85 contacts Mg(2+).

The protein belongs to the arthropod phospholipase D family. Class II subfamily. It depends on Mg(2+) as a cofactor. In terms of tissue distribution, expressed by the venom gland.

The protein localises to the secreted. It catalyses the reaction an N-(acyl)-sphingosylphosphocholine = an N-(acyl)-sphingosyl-1,3-cyclic phosphate + choline. The enzyme catalyses an N-(acyl)-sphingosylphosphoethanolamine = an N-(acyl)-sphingosyl-1,3-cyclic phosphate + ethanolamine. The catalysed reaction is a 1-acyl-sn-glycero-3-phosphocholine = a 1-acyl-sn-glycero-2,3-cyclic phosphate + choline. It carries out the reaction a 1-acyl-sn-glycero-3-phosphoethanolamine = a 1-acyl-sn-glycero-2,3-cyclic phosphate + ethanolamine. In terms of biological role, dermonecrotic toxins cleave the phosphodiester linkage between the phosphate and headgroup of certain phospholipids (sphingolipid and lysolipid substrates), forming an alcohol (often choline) and a cyclic phosphate. This toxin acts on sphingomyelin (SM). It may also act on ceramide phosphoethanolamine (CPE), lysophosphatidylcholine (LPC) and lysophosphatidylethanolamine (LPE), but not on lysophosphatidylserine (LPS), and lysophosphatidylglycerol (LPG). It acts by transphosphatidylation, releasing exclusively cyclic phosphate products as second products. Induces dermonecrosis, hemolysis, increased vascular permeability, edema, inflammatory response, and platelet aggregation. This chain is Dermonecrotic toxin LhSicTox-alphaIA2bi, found in Loxosceles hirsuta (Recluse spider).